A 189-amino-acid polypeptide reads, in one-letter code: MEQLCKRILEEGKALNEYVLKVDSFLNHNVDPKLMYEIGTYFKEYFSARGITKIFTIESSGIAPAVMTALQMDIPMVILKKQKPNTLTEDVYQTTVHSFTKGSDYELTLLKKYISDKDKILIIDDFLANGEASLGAVRLVETAGAEVSGIGIVIEKSFQKGRKCLEEKGYDIYSLARIKKLGKDLIEFL.

2 residues coordinate xanthine: leucine 20 and asparagine 27. 128-132 (ANGEA) contributes to the 5-phospho-alpha-D-ribose 1-diphosphate binding site. Lysine 156 is a xanthine binding site.

Belongs to the purine/pyrimidine phosphoribosyltransferase family. Xpt subfamily. As to quaternary structure, homodimer.

Its subcellular location is the cytoplasm. The catalysed reaction is XMP + diphosphate = xanthine + 5-phospho-alpha-D-ribose 1-diphosphate. The protein operates within purine metabolism; XMP biosynthesis via salvage pathway; XMP from xanthine: step 1/1. Its function is as follows. Converts the preformed base xanthine, a product of nucleic acid breakdown, to xanthosine 5'-monophosphate (XMP), so it can be reused for RNA or DNA synthesis. The sequence is that of Xanthine phosphoribosyltransferase from Clostridium acetobutylicum (strain ATCC 824 / DSM 792 / JCM 1419 / IAM 19013 / LMG 5710 / NBRC 13948 / NRRL B-527 / VKM B-1787 / 2291 / W).